Consider the following 228-residue polypeptide: FtsZ-localized protein A (228 aa).

The GST N-terminal domain maps to 3–85 (VERTLHHFPL…HIEETETEPP (83 aa)). Residues 90–223 (DPAERAEARR…WPGLAPAAHY (134 aa)) form the GST C-terminal domain.

It belongs to the GST superfamily. Homodimer. Interacts with FtsZ filaments. Probably interacts with the GTPase domain of FtsZ.

It is found in the cytoplasm. Functionally, essential cell division protein that must bind to FtsZ for division to occur. Critical coordinator of envelope constriction through its interaction with FtsZ. Promotes the formation of highly curved FtsZ filaments, reduces the GTPase activity of FtsZ and stabilizes FtsZ polymers. May regulate FtsZ function by modulating its superstructure. Does not bind to glutathione. In Caulobacter vibrioides (strain NA1000 / CB15N) (Caulobacter crescentus), this protein is FtsZ-localized protein A.